A 259-amino-acid polypeptide reads, in one-letter code: Thiazole synthase (259 aa).

Lys99 acts as the Schiff-base intermediate with DXP in catalysis. 1-deoxy-D-xylulose 5-phosphate-binding positions include Gly160, 186-187 (AG), and 208-209 (NT).

This sequence belongs to the ThiG family. In terms of assembly, homotetramer. Forms heterodimers with either ThiH or ThiS.

It localises to the cytoplasm. It carries out the reaction [ThiS sulfur-carrier protein]-C-terminal-Gly-aminoethanethioate + 2-iminoacetate + 1-deoxy-D-xylulose 5-phosphate = [ThiS sulfur-carrier protein]-C-terminal Gly-Gly + 2-[(2R,5Z)-2-carboxy-4-methylthiazol-5(2H)-ylidene]ethyl phosphate + 2 H2O + H(+). It participates in cofactor biosynthesis; thiamine diphosphate biosynthesis. In terms of biological role, catalyzes the rearrangement of 1-deoxy-D-xylulose 5-phosphate (DXP) to produce the thiazole phosphate moiety of thiamine. Sulfur is provided by the thiocarboxylate moiety of the carrier protein ThiS. In vitro, sulfur can be provided by H(2)S. The sequence is that of Thiazole synthase from Porphyromonas gingivalis (strain ATCC BAA-308 / W83).